A 187-amino-acid chain; its full sequence is Photosystem I assembly protein Ycf4 (187 aa).

Transmembrane regions (helical) follow at residues 25–47 (YWWA…SSYL) and 62–84 (FVPQ…IYLW).

Belongs to the Ycf4 family.

Its subcellular location is the plastid. It is found in the chloroplast thylakoid membrane. Seems to be required for the assembly of the photosystem I complex. The polypeptide is Photosystem I assembly protein Ycf4 (Mesostigma viride (Green alga)).